Consider the following 95-residue polypeptide: DNA/RNA-binding protein Alba (95 aa).

N6-acetyllysine is present on Lys-13.

The protein belongs to the histone-like Alba family. Acetylated. Acetylation at Lys-13 decreases DNA-binding affinity.

The protein resides in the cytoplasm. The protein localises to the chromosome. In terms of biological role, binds double-stranded DNA tightly but without sequence specificity. Involved in DNA compaction. The polypeptide is DNA/RNA-binding protein Alba (Nitrosopumilus maritimus (strain SCM1)).